A 200-amino-acid chain; its full sequence is Large ribosomal subunit protein bL25 (200 aa).

Belongs to the bacterial ribosomal protein bL25 family. CTC subfamily. As to quaternary structure, part of the 50S ribosomal subunit; part of the 5S rRNA/L5/L18/L25 subcomplex. Contacts the 5S rRNA. Binds to the 5S rRNA independently of L5 and L18.

In terms of biological role, this is one of the proteins that binds to the 5S RNA in the ribosome where it forms part of the central protuberance. This is Large ribosomal subunit protein bL25 from Pseudomonas fluorescens (strain SBW25).